A 330-amino-acid polypeptide reads, in one-letter code: UDP-glucose 4-epimerase (330 aa).

NAD(+) contacts are provided by residues 11–12 (YI), 31–36 (DALYTG), 51–52 (DI), 73–77 (FAAYS), Asn92, Ser117, Tyr141, Lys145, and Phe169. 2 residues coordinate substrate: Ser117 and Tyr141. Tyr141 functions as the Proton acceptor in the catalytic mechanism. Substrate contacts are provided by residues Asn170, 189–190 (HL), 206–208 (TIF), Arg221, and 282–285 (RGGD).

The protein belongs to the NAD(P)-dependent epimerase/dehydratase family. In terms of assembly, homodimer. Requires NAD(+) as cofactor.

The enzyme catalyses UDP-alpha-D-glucose = UDP-alpha-D-galactose. Its pathway is carbohydrate metabolism; galactose metabolism. Involved in the metabolism of galactose. Catalyzes the conversion of UDP-galactose (UDP-Gal) to UDP-glucose (UDP-Glc) through a mechanism involving the transient reduction of NAD. It also could be involved in preparation of carbohydrate residues for incorporation into complex polymers, such as exopolysaccharides. The protein is UDP-glucose 4-epimerase (galE) of Lactobacillus helveticus (Lactobacillus suntoryeus).